A 669-amino-acid polypeptide reads, in one-letter code: Alpha-1,4-glucan:maltose-1-phosphate maltosyltransferase 2 (669 aa).

The alpha-maltose 1-phosphate site is built by Lys-255, Gln-315, and Asp-350. Residue Asp-385 is the Nucleophile of the active site. Asn-386 is a binding site for alpha-maltose 1-phosphate. Glu-414 (proton donor) is an active-site residue. 525–526 (KY) serves as a coordination point for alpha-maltose 1-phosphate.

This sequence belongs to the glycosyl hydrolase 13 family. GlgE subfamily. In terms of assembly, homodimer.

The enzyme catalyses alpha-maltose 1-phosphate + [(1-&gt;4)-alpha-D-glucosyl](n) = [(1-&gt;4)-alpha-D-glucosyl](n+2) + phosphate. Maltosyltransferase that uses maltose 1-phosphate (M1P) as the sugar donor to elongate linear or branched alpha-(1-&gt;4)-glucans. Maltooligosaccharides with a degree of polymerization (DP) superior or equal to 4 are efficient acceptors, with DP6 being optimal in the GlgE-catalyzed polymerization with M1P. Is probably involved in a branched alpha-glucan biosynthetic pathway from trehalose, together with TreS, Mak and GlgB. This Streptomyces coelicolor (strain ATCC BAA-471 / A3(2) / M145) protein is Alpha-1,4-glucan:maltose-1-phosphate maltosyltransferase 2 (glgE2).